The following is a 430-amino-acid chain: Glutamyl-tRNA reductase 1 (430 aa).

Substrate is bound by residues 49-52, S109, 114-116, and Q120; these read TCNR and EGQ. C50 functions as the Nucleophile in the catalytic mechanism. 189–194 provides a ligand contact to NADP(+); the sequence is GAGSMA.

The protein belongs to the glutamyl-tRNA reductase family. Homodimer.

It carries out the reaction (S)-4-amino-5-oxopentanoate + tRNA(Glu) + NADP(+) = L-glutamyl-tRNA(Glu) + NADPH + H(+). The protein operates within porphyrin-containing compound metabolism; protoporphyrin-IX biosynthesis; 5-aminolevulinate from L-glutamyl-tRNA(Glu): step 1/2. Its function is as follows. Catalyzes the NADPH-dependent reduction of glutamyl-tRNA(Glu) to glutamate 1-semialdehyde (GSA). This chain is Glutamyl-tRNA reductase 1, found in Nocardioides sp. (strain ATCC BAA-499 / JS614).